Consider the following 627-residue polypeptide: DEAD-box ATP-dependent RNA helicase 35A (627 aa).

Low complexity-rich tracts occupy residues 1 to 15 (MAAA…AAAA) and 52 to 61 (SSSAAEAASD). Disordered regions lie at residues 1-23 (MAAA…EDNY) and 40-85 (LRRL…LEAS). Residues 62 to 72 (LPPPPPPPPNQ) are compositionally biased toward pro residues. Residues 182 to 210 (RDFRDLRLPEPMLRKLREKGIVQPTPIQV) carry the Q motif motif. The Helicase ATP-binding domain maps to 213–397 (LPVVLSGRDM…KSALVKPVIV (185 aa)). Position 226 to 233 (226 to 233 (AFTGSGKT)) interacts with ATP. A DEAD box motif is present at residues 345-348 (DEAD). The 161-residue stretch at 408–568 (DVIQEVEYVK…RIPPVLAELN (161 aa)) folds into the Helicase C-terminal domain. The CCHC-type zinc-finger motif lies at 584–601 (KGCAYCGGLGHRVTDCPK).

This sequence belongs to the DEAD box helicase family. DDX41 subfamily.

It catalyses the reaction ATP + H2O = ADP + phosphate + H(+). The protein is DEAD-box ATP-dependent RNA helicase 35A of Oryza sativa subsp. japonica (Rice).